A 549-amino-acid chain; its full sequence is Cation/acetate symporter ActP (549 aa).

13 consecutive transmembrane segments (helical) span residues 33–53 (WQAI…TYWA), 77–97 (LAIA…ALVF), 103–123 (GLIY…LIAE), 148–168 (ILSA…QMVG), 183–203 (IAVV…GMLA), 206–226 (WVQI…AFMV), 262–282 (ISAL…PHIL), 303–323 (GFMG…IMLV), 355–375 (LFLG…VAGL), 404–424 (VSKI…VLFE), 428–448 (IAFM…PIIL), 464–484 (GGWL…TIWV), and 493–513 (IFPY…GIWL).

Belongs to the sodium:solute symporter (SSF) (TC 2.A.21) family.

Its subcellular location is the cell inner membrane. Functionally, transports acetate. This is Cation/acetate symporter ActP from Escherichia coli O1:K1 / APEC.